A 510-amino-acid polypeptide reads, in one-letter code: NAD(P)H-quinone oxidoreductase subunit 2 B, chloroplastic (510 aa).

The next 13 membrane-spanning stretches (helical) occupy residues 24–44 (LLLF…GLIL), 57–77 (IPWL…ALLF), 99–119 (IFQF…VEYI), 124–144 (MAIA…MFLC), 149–169 (LITI…LSGY), 183–203 (YLLM…WLYG), 227–247 (PGIS…LSPA), 295–315 (WHLL…LIAI), 323–343 (MLAY…IVGN), 354–374 (YMLF…LFGL), 395–415 (ALSL…AGFF), 418–438 (LHLF…IGLL), and 484–504 (MIVC…IIAI).

This sequence belongs to the complex I subunit 2 family. NDH is composed of at least 16 different subunits, 5 of which are encoded in the nucleus.

It is found in the plastid. It localises to the chloroplast thylakoid membrane. The catalysed reaction is a plastoquinone + NADH + (n+1) H(+)(in) = a plastoquinol + NAD(+) + n H(+)(out). It catalyses the reaction a plastoquinone + NADPH + (n+1) H(+)(in) = a plastoquinol + NADP(+) + n H(+)(out). NDH shuttles electrons from NAD(P)H:plastoquinone, via FMN and iron-sulfur (Fe-S) centers, to quinones in the photosynthetic chain and possibly in a chloroplast respiratory chain. The immediate electron acceptor for the enzyme in this species is believed to be plastoquinone. Couples the redox reaction to proton translocation, and thus conserves the redox energy in a proton gradient. This is NAD(P)H-quinone oxidoreductase subunit 2 B, chloroplastic from Gossypium barbadense (Sea Island cotton).